Reading from the N-terminus, the 305-residue chain is Chromatin modification-related protein png2 (305 aa).

Residues 135-239 (TVTPQTSERR…PLVKHDTLDS (105 aa)) are disordered. Positions 153-167 (NQHSQQYSSQERSSS) are enriched in low complexity. Composition is skewed to polar residues over residues 168–183 (YNNFEDASSPQSSYHT) and 195–210 (KSSSPPLSSTKHAPQS). Tyr-181 carries the post-translational modification Phosphotyrosine. Thr-183 carries the phosphothreonine modification. Phosphoserine is present on residues Ser-197 and Ser-198. Residues 211-223 (TERRPVRRSESRL) are compositionally biased toward basic and acidic residues. A PHD-type zinc finger spans residues 248 to 297 (QLYCYCQQVSYGQMIGCDNENCKREWFHLPCVGLVEPPKGIWYCKECEEL). Cys-251, Cys-253, Cys-264, Cys-269, His-275, Cys-278, Cys-291, and Cys-294 together coordinate Zn(2+).

Belongs to the ING family. In terms of assembly, interacts with H3K4me3 and to a lesser extent with H3K4me2. Component of the clr6 histone deacetylase complex I'composed of at least clr6, png2, prw1, pst1 and sds3.

It is found in the cytoplasm. It localises to the nucleus. Component of the clr6 histone deacetylase complex I' responsible for the deacetylation of lysine residues on the N-terminal part of the core histones (H2A, H2B, H3 and H4). Histone deacetylation gives a tag for epigenetic repression and plays an important role in transcriptional regulation, cell cycle progression and developmental events. Has a role in silencing of mating type genes. The protein is Chromatin modification-related protein png2 (png2) of Schizosaccharomyces pombe (strain 972 / ATCC 24843) (Fission yeast).